Reading from the N-terminus, the 273-residue chain is MPELPEVETVRRSLEQELVGRYFVALRSLGWPKIVDTHSPELFAEAIAQRQIQQVQRRAKYLLIELDNHETLIVHLRMTGQMLVVAADEPADRHTHVVVALDNGRELRFHDPRKFGRWSLVDRSGVAALNQRLGPEPLGDDFTLDDFAQRLSRKATKIKPTLLDQSVLAGVGNIYADEALWLAKIHPLRSANSLNANEIAELFEAIKTVLRNSIEHRGTTLVNYRDAYGASGENQYHLEAYGRTGEPCRRCGTPIERIVVAQRSTHICPVCQA.

The Schiff-base intermediate with DNA role is filled by proline 2. Glutamate 3 (proton donor) is an active-site residue. The Proton donor; for beta-elimination activity role is filled by lysine 60. The DNA site is built by histidine 94, arginine 113, and lysine 154. Residues 239–273 form an FPG-type zinc finger; sequence EAYGRTGEPCRRCGTPIERIVVAQRSTHICPVCQA. Arginine 263 acts as the Proton donor; for delta-elimination activity in catalysis.

Belongs to the FPG family. Monomer. Zn(2+) is required as a cofactor.

It carries out the reaction Hydrolysis of DNA containing ring-opened 7-methylguanine residues, releasing 2,6-diamino-4-hydroxy-5-(N-methyl)formamidopyrimidine.. It catalyses the reaction 2'-deoxyribonucleotide-(2'-deoxyribose 5'-phosphate)-2'-deoxyribonucleotide-DNA = a 3'-end 2'-deoxyribonucleotide-(2,3-dehydro-2,3-deoxyribose 5'-phosphate)-DNA + a 5'-end 5'-phospho-2'-deoxyribonucleoside-DNA + H(+). Functionally, involved in base excision repair of DNA damaged by oxidation or by mutagenic agents. Acts as a DNA glycosylase that recognizes and removes damaged bases. Has a preference for oxidized purines, such as 7,8-dihydro-8-oxoguanine (8-oxoG). Has AP (apurinic/apyrimidinic) lyase activity and introduces nicks in the DNA strand. Cleaves the DNA backbone by beta-delta elimination to generate a single-strand break at the site of the removed base with both 3'- and 5'-phosphates. The protein is Formamidopyrimidine-DNA glycosylase of Herpetosiphon aurantiacus (strain ATCC 23779 / DSM 785 / 114-95).